Consider the following 466-residue polypeptide: Glycine--tRNA ligase (466 aa).

R104 and E178 together coordinate substrate. ATP contacts are provided by residues 210–212, 220–225, 294–295, and 338–341; these read RNE, FRTREF, EL, and GADR. 225–229 provides a ligand contact to substrate; that stretch reads FEQME. Residue 334–338 coordinates substrate; that stretch reads EPSLG.

This sequence belongs to the class-II aminoacyl-tRNA synthetase family. As to quaternary structure, homodimer.

The protein localises to the cytoplasm. The enzyme catalyses tRNA(Gly) + glycine + ATP = glycyl-tRNA(Gly) + AMP + diphosphate. Functionally, catalyzes the attachment of glycine to tRNA(Gly). The sequence is that of Glycine--tRNA ligase from Geobacillus thermodenitrificans (strain NG80-2).